Reading from the N-terminus, the 179-residue chain is Large ribosomal subunit protein uL5 (179 aa).

Belongs to the universal ribosomal protein uL5 family. As to quaternary structure, part of the 50S ribosomal subunit; part of the 5S rRNA/L5/L18/L25 subcomplex. Contacts the 5S rRNA and the P site tRNA. Forms a bridge to the 30S subunit in the 70S ribosome.

Its function is as follows. This is one of the proteins that bind and probably mediate the attachment of the 5S RNA into the large ribosomal subunit, where it forms part of the central protuberance. In the 70S ribosome it contacts protein S13 of the 30S subunit (bridge B1b), connecting the 2 subunits; this bridge is implicated in subunit movement. Contacts the P site tRNA; the 5S rRNA and some of its associated proteins might help stabilize positioning of ribosome-bound tRNAs. This is Large ribosomal subunit protein uL5 from Delftia acidovorans (strain DSM 14801 / SPH-1).